The following is a 422-amino-acid chain: UDP-N-acetylmuramoylalanine--D-glutamate ligase (422 aa).

102–108 (GTNGKTT) contributes to the ATP binding site.

The protein belongs to the MurCDEF family.

Its subcellular location is the cytoplasm. It catalyses the reaction UDP-N-acetyl-alpha-D-muramoyl-L-alanine + D-glutamate + ATP = UDP-N-acetyl-alpha-D-muramoyl-L-alanyl-D-glutamate + ADP + phosphate + H(+). Its pathway is cell wall biogenesis; peptidoglycan biosynthesis. Its function is as follows. Cell wall formation. Catalyzes the addition of glutamate to the nucleotide precursor UDP-N-acetylmuramoyl-L-alanine (UMA). This chain is UDP-N-acetylmuramoylalanine--D-glutamate ligase, found in Helicobacter pylori (strain J99 / ATCC 700824) (Campylobacter pylori J99).